The sequence spans 279 residues: Large ribosomal subunit protein uL2 (279 aa).

2 disordered regions span residues 32–58 (SLLT…GGGH) and 223–279 (GVAM…RKRG). Basic residues-rich tracts occupy residues 40–58 (KGGR…GGGH) and 269–279 (VRRRYATRKRG).

The protein belongs to the universal ribosomal protein uL2 family. As to quaternary structure, part of the 50S ribosomal subunit. Forms a bridge to the 30S subunit in the 70S ribosome.

Functionally, one of the primary rRNA binding proteins. Required for association of the 30S and 50S subunits to form the 70S ribosome, for tRNA binding and peptide bond formation. It has been suggested to have peptidyltransferase activity; this is somewhat controversial. Makes several contacts with the 16S rRNA in the 70S ribosome. The polypeptide is Large ribosomal subunit protein uL2 (Salinispora tropica (strain ATCC BAA-916 / DSM 44818 / JCM 13857 / NBRC 105044 / CNB-440)).